The primary structure comprises 142 residues: Sorting nexin-3 (142 aa).

Residues N21 to D138 enclose the PX domain. R64, S66, K90, R95, and R104 together coordinate a 1,2-diacyl-sn-glycero-3-phospho-(1D-myo-inositol-3-phosphate).

It belongs to the sorting nexin family.

The protein localises to the cytoplasm. The protein resides in the golgi apparatus membrane. Its subcellular location is the prevacuolar compartment membrane. In terms of biological role, required for retention of late Golgi membrane proteins. Component of the retrieval machinery that functions by direct interaction with the cytosolic tails of certain TGN membrane proteins during the sorting/budding process at the prevacuolar compartment. Binds phosphatidylinositol 3-phosphate (PtdIns(P3)). The chain is Sorting nexin-3 (snx3) from Aspergillus fumigatus (strain ATCC MYA-4609 / CBS 101355 / FGSC A1100 / Af293) (Neosartorya fumigata).